Reading from the N-terminus, the 231-residue chain is Succinate dehydrogenase subunit 5, mitochondrial (231 aa).

Residues 1–63 (MAAALRSSCA…AFSWNLRRLF (63 aa)) constitute a mitochondrion transit peptide.

In terms of assembly, component of complex II composed of eight subunits in plants: four classical SDH subunits SDH1, SDH2, SDH3 and SDH4 (a flavoprotein (FP), an iron-sulfur protein (IP), and a cytochrome b composed of a large and a small subunit.), as well as four subunits unknown in mitochondria from bacteria and heterotrophic eukaryotes.

It is found in the mitochondrion inner membrane. The protein operates within carbohydrate metabolism; tricarboxylic acid cycle. This Oryza sativa subsp. japonica (Rice) protein is Succinate dehydrogenase subunit 5, mitochondrial.